The primary structure comprises 99 residues: UPF0122 protein UUR10_0158 (99 aa).

It belongs to the UPF0122 family.

Its function is as follows. Might take part in the signal recognition particle (SRP) pathway. This is inferred from the conservation of its genetic proximity to ftsY/ffh. May be a regulatory protein. This Ureaplasma urealyticum serovar 10 (strain ATCC 33699 / Western) protein is UPF0122 protein UUR10_0158.